The primary structure comprises 267 residues: 4,5-DOPA dioxygenase extradiol (267 aa).

Positions 9, 47, 168, and 222 each coordinate Zn(2+).

It belongs to the DODA-type extradiol aromatic ring-opening dioxygenase family. Requires Zn(2+) as cofactor. Fe(2+) serves as cofactor. In terms of tissue distribution, expressed in petals. Not detected in leaves, stems and roots.

Its subcellular location is the cytoplasm. The enzyme catalyses L-dopa + O2 = 4-(L-alanin-3-yl)-2-hydroxy-cis,cis-muconate 6-semialdehyde + H(+). It participates in pigment biosynthesis; betalain biosynthesis. Opens the cyclic ring of dihydroxy-phenylalanine (DOPA) between carbons 4 and 5, thus producing an unstable seco-DOPA that rearranges nonenzymatically to betalamic acid. Produces mainly (S)-betalamic acid. Required for the coloration of flowers. This chain is 4,5-DOPA dioxygenase extradiol (DOD), found in Mirabilis jalapa (Garden four-o'clock).